The following is a 622-amino-acid chain: Chaperone protein HscA homolog (622 aa).

It belongs to the heat shock protein 70 family.

Functionally, chaperone involved in the maturation of iron-sulfur cluster-containing proteins. Has a low intrinsic ATPase activity which is markedly stimulated by HscB. The sequence is that of Chaperone protein HscA homolog from Burkholderia cenocepacia (strain ATCC BAA-245 / DSM 16553 / LMG 16656 / NCTC 13227 / J2315 / CF5610) (Burkholderia cepacia (strain J2315)).